We begin with the raw amino-acid sequence, 929 residues long: Patatin-like phospholipase domain-containing protein CNE02340 (929 aa).

Positions 37–85 (QPLDGDSSPLSPRSFSLPPESPQLSTASVKAPPPTWKYGPDNGTLRSGR) are disordered. A compositionally biased stretch (low complexity) spans 43–54 (SSPLSPRSFSLP). Residues 126–146 (WPLLFFIFFIIYLEFSAYVIT) form a helical membrane-spanning segment. The PNPLA domain maps to 301 to 493 (LCLSGGASFG…REDIPLGSLH (193 aa)). The GXSXG signature appears at 332–336 (GTSAG). The active-site Nucleophile is the S334. The active-site Proton acceptor is the D480. 3 disordered regions span residues 644-765 (ALSH…NFGD), 778-806 (LSSPFRSIRSNTSSSSNNVQSPSSSQRFR), and 818-929 (VSES…QDGA). Polar residues-rich tracts occupy residues 652 to 664 (NDPATSLPETNPE) and 745 to 764 (PTHSPIATESPQRNYTSNFG). Residues 779–806 (SSPFRSIRSNTSSSSNNVQSPSSSQRFR) are compositionally biased toward low complexity. A compositionally biased stretch (basic and acidic residues) spans 856–878 (VESHSDRSEDEMLHSGANVKEEY).

Belongs to the PLPL family.

The protein localises to the membrane. Its function is as follows. Probable lipid hydrolase. In Cryptococcus neoformans var. neoformans serotype D (strain JEC21 / ATCC MYA-565) (Filobasidiella neoformans), this protein is Patatin-like phospholipase domain-containing protein CNE02340.